The chain runs to 220 residues: Octanoyltransferase (220 aa).

A BPL/LPL catalytic domain is found at 34-209 (ENSQDEIWVV…TLSQELGLAN (176 aa)). Residues 73–80 (RGGQVTYH), 140–142 (SLG), and 153–155 (GLA) each bind substrate. Cys-171 acts as the Acyl-thioester intermediate in catalysis.

The protein belongs to the LipB family.

The protein localises to the cytoplasm. It carries out the reaction octanoyl-[ACP] + L-lysyl-[protein] = N(6)-octanoyl-L-lysyl-[protein] + holo-[ACP] + H(+). The protein operates within protein modification; protein lipoylation via endogenous pathway; protein N(6)-(lipoyl)lysine from octanoyl-[acyl-carrier-protein]: step 1/2. Functionally, catalyzes the transfer of endogenously produced octanoic acid from octanoyl-acyl-carrier-protein onto the lipoyl domains of lipoate-dependent enzymes. Lipoyl-ACP can also act as a substrate although octanoyl-ACP is likely to be the physiological substrate. This Shewanella piezotolerans (strain WP3 / JCM 13877) protein is Octanoyltransferase.